Consider the following 279-residue polypeptide: Small ribosomal subunit protein uS9m (279 aa).

It belongs to the universal ribosomal protein uS9 family.

The protein localises to the mitochondrion. The chain is Small ribosomal subunit protein uS9m (MRPS9) from Eremothecium gossypii (strain ATCC 10895 / CBS 109.51 / FGSC 9923 / NRRL Y-1056) (Yeast).